Here is a 172-residue protein sequence, read N- to C-terminus: Bifunctional protein PyrR (172 aa).

The PRPP-binding signature appears at 90–102 (LVLVDDVLMSGRT).

It belongs to the purine/pyrimidine phosphoribosyltransferase family. PyrR subfamily.

The catalysed reaction is UMP + diphosphate = 5-phospho-alpha-D-ribose 1-diphosphate + uracil. Its function is as follows. Regulates the transcription of the pyrimidine nucleotide (pyr) operon in response to exogenous pyrimidines. Also displays a weak uracil phosphoribosyltransferase activity which is not physiologically significant. The polypeptide is Bifunctional protein PyrR (Pseudomonas putida (strain GB-1)).